Here is a 409-residue protein sequence, read N- to C-terminus: TNF receptor-associated factor 1 (409 aa).

Serine 139 is subject to Phosphoserine. Residues 167 to 256 (EELALQHLVK…EHSLRLMEEA (90 aa)) are a coiled coil. Residues lysine 178 and lysine 186 each participate in a glycyl lysine isopeptide (Lys-Gly) (interchain with G-Cter in ubiquitin) cross-link. In terms of domain architecture, MATH spans 259–405 (DGTFLWKITN…DDTMFLKCIV (147 aa)).

In terms of assembly, homotrimer. Heterotrimer with TRAF2. Interacts with TNFRSF1A/TNFR1, TNFRSF1B/TNFR2, TNFRSF4, TNFRSF5/CD40, TNFRSF8/CD30, TNFRSF9/CD137, TNFRSF11A/RANK, TNFRSF13C, TNFRSF18/AITR, TNFRSF17/BCMA, TNFRSF19/TROY, TNFRSF19L/RELT, XEDAR, EDAR, Epstein-Barr virus BNFL1/LMP-1, TANK/ITRAF, TRAIP and RIPK2. Interacts with BIRC2 and BIRC3 N-terminus; a single BIRC2 or BIRC3 molecule interacts with a heterotrimer formed by TRAF1 and TRAF2. Interacts with MAP3K14. Interacts with NFATC2IP, TRAFD1 and with HIVEP3. Interacts with GPS2. Post-translationally, polyubiquitinated by BIRC2 and/or BIRC3, leading to its subsequent proteasomal degradation. Ubiquitinated by the SCF(FBXL2) complex, leading to its degradation by the proteasome.

Its subcellular location is the cytoplasm. Adapter molecule that regulates the activation of NF-kappa-B and JNK. Plays a role in the regulation of cell survival and apoptosis. The heterotrimer formed by TRAF1 and TRAF2 is part of a E3 ubiquitin-protein ligase complex that promotes ubiquitination of target proteins, such as MAP3K14. The TRAF1/TRAF2 complex recruits the antiapoptotic E3 protein-ubiquitin ligases BIRC2 and BIRC3 to TNFRSF1B/TNFR2. The sequence is that of TNF receptor-associated factor 1 (Traf1) from Mus musculus (Mouse).